Reading from the N-terminus, the 70-residue chain is ATP synthase subunit c (70 aa).

The next 2 helical transmembrane spans lie at 5 to 25 and 47 to 67; these read AAAI…GLIV and FIGV…AFMV.

Belongs to the ATPase C chain family. F-type ATPases have 2 components, F(1) - the catalytic core - and F(0) - the membrane proton channel. F(1) has five subunits: alpha(3), beta(3), gamma(1), delta(1), epsilon(1). F(0) has three main subunits: a(1), b(2) and c(10-14). The alpha and beta chains form an alternating ring which encloses part of the gamma chain. F(1) is attached to F(0) by a central stalk formed by the gamma and epsilon chains, while a peripheral stalk is formed by the delta and b chains.

It is found in the cell membrane. F(1)F(0) ATP synthase produces ATP from ADP in the presence of a proton or sodium gradient. F-type ATPases consist of two structural domains, F(1) containing the extramembraneous catalytic core and F(0) containing the membrane proton channel, linked together by a central stalk and a peripheral stalk. During catalysis, ATP synthesis in the catalytic domain of F(1) is coupled via a rotary mechanism of the central stalk subunits to proton translocation. Its function is as follows. Key component of the F(0) channel; it plays a direct role in translocation across the membrane. A homomeric c-ring of between 10-14 subunits forms the central stalk rotor element with the F(1) delta and epsilon subunits. In Anoxybacillus flavithermus (strain DSM 21510 / WK1), this protein is ATP synthase subunit c.